Reading from the N-terminus, the 47-residue chain is Protein YtiD (47 aa).

This is Protein YtiD (ytiD) from Escherichia coli (strain K12).